A 177-amino-acid polypeptide reads, in one-letter code: UPF0340 protein STH78 (177 aa).

It belongs to the UPF0340 family.

The protein is UPF0340 protein STH78 of Symbiobacterium thermophilum (strain DSM 24528 / JCM 14929 / IAM 14863 / T).